A 150-amino-acid chain; its full sequence is Detocs response regulatory protein DtcB (150 aa).

The Response regulatory domain occupies 2-150 (KILIADDNIQ…TDLIKKITEL (149 aa)). Asp54 is modified (4-aspartylphosphate).

Post-translationally, probably phosphorylated by DtcA.

Its function is as follows. Possible phosphate scavenger member of the two-component regulatory system Detocs that confers resistance to bacteriophage. When the system (DtcA-DtcB-DtcC) is expressed in a susceptible E.coli (strain MG1655) it confers resistance to bacteriophages T2, T4, T5, T7, SECphi4, SECphi6 and SECphi27; the level of resistance varies, resistance to T2, T7 and SECphi4 is not very high. DtcA probably autophosphorylates upon sensing viral infection, and subsequently transfers the phosphate signal to DtcC which activates it, leading to an antiviral defense; DtcB (this subunit) may scavenge phosphorylation signals from accidental activation of DtcA. The polypeptide is Detocs response regulatory protein DtcB (Enterobacter cloacae (strain JD6301)).